Here is a 177-residue protein sequence, read N- to C-terminus: Large ribosomal subunit protein uL6 (177 aa).

Residues 152–171 (RPPEPYKGKGVRYDDEEVRR) show a composition bias toward basic and acidic residues. Residues 152 to 177 (RPPEPYKGKGVRYDDEEVRRKEAKKK) form a disordered region.

Belongs to the universal ribosomal protein uL6 family. As to quaternary structure, part of the 50S ribosomal subunit.

This protein binds to the 23S rRNA, and is important in its secondary structure. It is located near the subunit interface in the base of the L7/L12 stalk, and near the tRNA binding site of the peptidyltransferase center. This Shewanella sp. (strain ANA-3) protein is Large ribosomal subunit protein uL6.